We begin with the raw amino-acid sequence, 301 residues long: Acetylglutamate kinase (301 aa).

Substrate contacts are provided by residues 68-69 (GG), arginine 90, and asparagine 195.

This sequence belongs to the acetylglutamate kinase family. ArgB subfamily.

It is found in the cytoplasm. It carries out the reaction N-acetyl-L-glutamate + ATP = N-acetyl-L-glutamyl 5-phosphate + ADP. Its pathway is amino-acid biosynthesis; L-arginine biosynthesis; N(2)-acetyl-L-ornithine from L-glutamate: step 2/4. In terms of biological role, catalyzes the ATP-dependent phosphorylation of N-acetyl-L-glutamate. This is Acetylglutamate kinase from Pseudomonas putida (strain W619).